Consider the following 173-residue polypeptide: Crossover junction endodeoxyribonuclease RuvC (173 aa).

Active-site residues include Asp-8, Glu-67, and Asp-139. Residues Asp-8, Glu-67, and Asp-139 each contribute to the Mg(2+) site.

This sequence belongs to the RuvC family. In terms of assembly, homodimer which binds Holliday junction (HJ) DNA. The HJ becomes 2-fold symmetrical on binding to RuvC with unstacked arms; it has a different conformation from HJ DNA in complex with RuvA. In the full resolvosome a probable DNA-RuvA(4)-RuvB(12)-RuvC(2) complex forms which resolves the HJ. Mg(2+) serves as cofactor.

The protein localises to the cytoplasm. It catalyses the reaction Endonucleolytic cleavage at a junction such as a reciprocal single-stranded crossover between two homologous DNA duplexes (Holliday junction).. In terms of biological role, the RuvA-RuvB-RuvC complex processes Holliday junction (HJ) DNA during genetic recombination and DNA repair. Endonuclease that resolves HJ intermediates. Cleaves cruciform DNA by making single-stranded nicks across the HJ at symmetrical positions within the homologous arms, yielding a 5'-phosphate and a 3'-hydroxyl group; requires a central core of homology in the junction. The consensus cleavage sequence is 5'-(A/T)TT(C/G)-3'. Cleavage occurs on the 3'-side of the TT dinucleotide at the point of strand exchange. HJ branch migration catalyzed by RuvA-RuvB allows RuvC to scan DNA until it finds its consensus sequence, where it cleaves and resolves the cruciform DNA. This Vibrio atlanticus (strain LGP32) (Vibrio splendidus (strain Mel32)) protein is Crossover junction endodeoxyribonuclease RuvC.